We begin with the raw amino-acid sequence, 564 residues long: MFS-type transporter kojT (564 aa).

The N-linked (GlcNAc...) asparagine glycan is linked to Asn-113. The next 12 helical transmembrane spans lie at 120–140 (WATL…SSID), 159–179 (SLAT…AAPF), 187–207 (PVYI…GLAP), 217–237 (FLAG…MADI), 249–269 (VCCT…AFIG), 278–298 (WTEW…FLFV), 353–373 (IMVA…FGFL), 389–409 (GSVG…FAMV), 437–457 (LWFA…MGWT), 462–482 (ISYW…QGIF), 500–520 (ALVS…IVSI), and 530–550 (WSLT…YIFY).

This sequence belongs to the major facilitator superfamily.

It is found in the cell membrane. MFS-type transporter; part of the gene cluster that mediates the biosynthesis of 5-hydroxy-2-hydroxymethyl-1,4-pyrone, also know as kojic acid, a by-product in the fermentation process of malting rice that acts as a chelation agent. Involved in the seretion of kojic acid. The chain is MFS-type transporter kojT from Aspergillus flavus (strain ATCC 200026 / FGSC A1120 / IAM 13836 / NRRL 3357 / JCM 12722 / SRRC 167).